An 89-amino-acid polypeptide reads, in one-letter code: HssA/B-like protein 10 (89 aa).

It belongs to the hssA/B family.

In Dictyostelium discoideum (Social amoeba), this protein is HssA/B-like protein 10 (hssl10).